A 208-amino-acid chain; its full sequence is Large ribosomal subunit protein bL9 (208 aa).

The disordered stretch occupies residues 168-208 (GKVEKGSCTEGESLELGSVDNDINSGNVDSNESEKQDSVSE). Polar residues predominate over residues 188-197 (NDINSGNVDS). A compositionally biased stretch (basic and acidic residues) spans 199-208 (ESEKQDSVSE).

The protein belongs to the bacterial ribosomal protein bL9 family.

Its function is as follows. Binds to the 23S rRNA. The polypeptide is Large ribosomal subunit protein bL9 (Ehrlichia chaffeensis (strain ATCC CRL-10679 / Arkansas)).